Reading from the N-terminus, the 313-residue chain is Thiamine thiazole synthase (313 aa).

Substrate-binding positions include Ala71, 92–93 (EA), Gly100, and Val165. 2,3-didehydroalanine (Cys) is present on Cys199. Substrate-binding positions include Asp201, His216, Met268, and 278–280 (RMG).

It belongs to the THI4 family. In terms of assembly, homooctamer. Requires Fe cation as cofactor. Post-translationally, during the catalytic reaction, a sulfide is transferred from Cys-199 to a reaction intermediate, generating a dehydroalanine residue.

It is found in the cytoplasm. The protein resides in the nucleus. The catalysed reaction is [ADP-thiazole synthase]-L-cysteine + glycine + NAD(+) = [ADP-thiazole synthase]-dehydroalanine + ADP-5-ethyl-4-methylthiazole-2-carboxylate + nicotinamide + 3 H2O + 2 H(+). Its function is as follows. Involved in biosynthesis of the thiamine precursor thiazole. Catalyzes the conversion of NAD and glycine to adenosine diphosphate 5-(2-hydroxyethyl)-4-methylthiazole-2-carboxylic acid (ADT), an adenylated thiazole intermediate. The reaction includes an iron-dependent sulfide transfer from a conserved cysteine residue of the protein to a thiazole intermediate. The enzyme can only undergo a single turnover, which suggests it is a suicide enzyme. May have additional roles in adaptation to various stress conditions and in DNA damage tolerance. The sequence is that of Thiamine thiazole synthase from Coprinopsis cinerea (strain Okayama-7 / 130 / ATCC MYA-4618 / FGSC 9003) (Inky cap fungus).